The chain runs to 288 residues: Quinate/shikimate dehydrogenase (288 aa).

The substrate site is built by Lys71 and Asp107. Residues 132–135 (AGGA), 155–158 (NRRD), Lys205, 232–235 (CVYN), and Gly255 contribute to the NAD(+) site.

It belongs to the shikimate dehydrogenase family. As to quaternary structure, homodimer.

The catalysed reaction is L-quinate + NAD(+) = 3-dehydroquinate + NADH + H(+). It catalyses the reaction L-quinate + NADP(+) = 3-dehydroquinate + NADPH + H(+). It carries out the reaction shikimate + NADP(+) = 3-dehydroshikimate + NADPH + H(+). The enzyme catalyses shikimate + NAD(+) = 3-dehydroshikimate + NADH + H(+). It participates in metabolic intermediate biosynthesis; chorismate biosynthesis; chorismate from D-erythrose 4-phosphate and phosphoenolpyruvate: step 4/7. The actual biological function of YdiB remains unclear, nor is it known whether 3-dehydroshikimate or quinate represents the natural substrate. Catalyzes the reversible NAD-dependent reduction of both 3-dehydroshikimate (DHSA) and 3-dehydroquinate to yield shikimate (SA) and quinate, respectively. It can use both NAD or NADP for catalysis, however it has higher catalytic efficiency with NAD. This is Quinate/shikimate dehydrogenase from Escherichia coli (strain SMS-3-5 / SECEC).